The following is an 827-amino-acid chain: 6-phosphofructo-2-kinase 1 (827 aa).

Disordered stretches follow at residues 1–97 (MFKP…ENSA) and 149–175 (TRHHKRRPTTIDVPGLTKSKTSPDGLI). The segment covering 31–41 (SQDSSYDLLSR) has biased composition (low complexity). A compositionally biased stretch (basic and acidic residues) spans 42–59 (SSDDKIDAEKGPHDELSK). Over residues 72–97 (TPISSNWNSPGITEENTPSDSPENSA) the composition is skewed to polar residues. Phosphoserine is present on Ser92. The residue at position 157 (Thr157) is a Phosphothreonine. 190–197 (GLPATGKS) serves as a coordination point for ATP. Active-site residues include Asp277 and Cys309. Arg343 is a beta-D-fructose 6-phosphate binding site. Ser404 functions as the Phosphoserine intermediate in the catalytic mechanism. Glu497 is an active-site residue. His565 functions as the Proton donor in the catalytic mechanism. Phosphoserine is present on residues Ser644, Ser652, Ser659, and Ser667. Disordered stretches follow at residues 649–704 (APPS…SNFN) and 799–827 (HGKDYPNNADNNDNEDIRAKTMNRSQSHV). The segment covering 671–682 (SASSSQSELSEQ) has biased composition (low complexity). Positions 683-704 (PKNSVSAQTGSNNTTLIGSNFN) are enriched in polar residues.

It catalyses the reaction beta-D-fructose 6-phosphate + ATP = beta-D-fructose 2,6-bisphosphate + ADP + H(+). Its activity is regulated as follows. Phosphorylation results in the activation of the kinase activity. Functionally, synthesis of fructose 2,6-bisphosphate. This is 6-phosphofructo-2-kinase 1 (PFK26) from Saccharomyces cerevisiae (strain ATCC 204508 / S288c) (Baker's yeast).